The chain runs to 251 residues: Ubiquinone/menaquinone biosynthesis C-methyltransferase UbiE (251 aa).

S-adenosyl-L-methionine-binding positions include Thr74, Asp95, and 123–124 (NA).

It belongs to the class I-like SAM-binding methyltransferase superfamily. MenG/UbiE family.

The catalysed reaction is a 2-demethylmenaquinol + S-adenosyl-L-methionine = a menaquinol + S-adenosyl-L-homocysteine + H(+). It catalyses the reaction a 2-methoxy-6-(all-trans-polyprenyl)benzene-1,4-diol + S-adenosyl-L-methionine = a 5-methoxy-2-methyl-3-(all-trans-polyprenyl)benzene-1,4-diol + S-adenosyl-L-homocysteine + H(+). It functions in the pathway quinol/quinone metabolism; menaquinone biosynthesis; menaquinol from 1,4-dihydroxy-2-naphthoate: step 2/2. The protein operates within cofactor biosynthesis; ubiquinone biosynthesis. Functionally, methyltransferase required for the conversion of demethylmenaquinol (DMKH2) to menaquinol (MKH2) and the conversion of 2-polyprenyl-6-methoxy-1,4-benzoquinol (DDMQH2) to 2-polyprenyl-3-methyl-6-methoxy-1,4-benzoquinol (DMQH2). In Shewanella sp. (strain ANA-3), this protein is Ubiquinone/menaquinone biosynthesis C-methyltransferase UbiE.